The chain runs to 741 residues: Methionine--tRNA ligase (741 aa).

A compositionally biased stretch (polar residues) spans 1 to 22 (MTMKQYTMSKMNAETQTQTRES). Positions 1–25 (MTMKQYTMSKMNAETQTQTRESFPT) are disordered. The 'HIGH' region motif lies at 36–46 (PYANGDLHIGH). Residues C167, C170, C179, and C183 each contribute to the Zn(2+) site. The disordered stretch occupies residues 309–329 (VRSHSSSSAKDSSEGNSPSNI). A compositionally biased stretch (low complexity) spans 311–329 (SHSSSSAKDSSEGNSPSNI). T381 is an ATP binding site. The interval 591 to 629 (KLADRVTDPTDDDDSDTDTETGTDVAETTNESHSESNMT) is disordered. Acidic residues predominate over residues 599–611 (PTDDDDSDTDTET). The segment covering 616 to 629 (AETTNESHSESNMT) has biased composition (polar residues). One can recognise a tRNA-binding domain in the interval 643–741 (EFEELDLRVA…EDADPGTSIQ (99 aa)).

Belongs to the class-I aminoacyl-tRNA synthetase family. MetG type 1 subfamily. Homodimer. The cofactor is Zn(2+).

The protein localises to the cytoplasm. It catalyses the reaction tRNA(Met) + L-methionine + ATP = L-methionyl-tRNA(Met) + AMP + diphosphate. Is required not only for elongation of protein synthesis but also for the initiation of all mRNA translation through initiator tRNA(fMet) aminoacylation. The polypeptide is Methionine--tRNA ligase (Haloquadratum walsbyi (strain DSM 16790 / HBSQ001)).